A 177-amino-acid chain; its full sequence is Endothelin-2 (177 aa).

The signal sequence occupies residues 1–23 (MPTALCSIALALLVALHEGKSQA). A propeptide spanning residues 24 to 45 (ATTPIPEQPAPLPRARGSHLRT) is cleaved from the precursor. Disulfide bonds link Cys48–Cys62 and Cys50–Cys58. Positions 69–177 (VNTPGQTAPY…RPTHSRQRKR (109 aa)) are excised as a propeptide. An endothelin-like region spans residues 95–110 (CECYSARDPACATFCH). The tract at residues 155-177 (HFARQQQKPTRETRPTHSRQRKR) is disordered.

Belongs to the endothelin/sarafotoxin family. As to expression, expressed in various organs including heart, lung, liver, kidney, gastrointestinal tract, uterus and ovary, but not in spleen. Within the gastrointestinal tract, gene expression was detected in rumen, a ruminant-specific digestive organ, as well as stomach, duodenum and colon.

The protein resides in the secreted. Its function is as follows. Endothelins are endothelium-derived vasoconstrictor peptides. The protein is Endothelin-2 (EDN2) of Bos taurus (Bovine).